A 121-amino-acid polypeptide reads, in one-letter code: Probable V-type proton ATPase subunit F (121 aa).

The protein belongs to the V-ATPase F subunit family. As to quaternary structure, V-ATPase is a heteromultimeric enzyme made up of two complexes: the ATP-hydrolytic V1 complex and the proton translocation V0 complex. The V1 complex consists of three catalytic AB heterodimers that form a heterohexamer, three peripheral stalks each consisting of EG heterodimers, one central rotor including subunits D and F, and the regulatory subunits C and H. The proton translocation complex V0 consists of the proton transport subunit a, a ring of proteolipid subunits c9c'', rotary subunit d, subunits e and f, and the accessory subunits vah-19/Ac45 and vah-20/PRR.

Its function is as follows. Subunit of the V1 complex of vacuolar(H+)-ATPase (V-ATPase), a multisubunit enzyme composed of a peripheral complex (V1) that hydrolyzes ATP and a membrane integral complex (V0) that translocates protons. V-ATPase is responsible for acidifying and maintaining the pH of intracellular compartments and in some cell types, is targeted to the plasma membrane, where it is responsible for acidifying the extracellular environment. Required along with other vacuolar ATPase components for the removal of protein aggregates which form in immature oocytes in the distal gonad. This removal occurs as the oocytes mature and move to the proximal gonad, is triggered by the introduction of sperm through mating and occurs before fertilization. The introduction of sperm triggers V-ATPase accumulation in proximal oocytes and induces lysosomal acidification which leads to engulfing of protein aggregates by lysosomes and subsequent clearance of the aggregates. Lysosomal acidification also leads to changes in mitochondrial morphology and function. Mitochondria in distal immature oocytes are fragmented, produce high levels of reactive oxygen species (ROS) and have high membrane potential, indicative of metabolic inactivity. In contrast, mitochondria in proximal mature oocytes are tubular with lower ROS levels and membrane potential, indicative of an active metabolic state required for aggregate mobilization before clearance. In Caenorhabditis elegans, this protein is Probable V-type proton ATPase subunit F.